The chain runs to 496 residues: Probable zinc metalloprotease SNOG_06590 (496 aa).

Positions 1-20 (MRSSMFFAVCAAAALQTALS) are cleaved as a signal peptide. Asparagine 138 carries an N-linked (GlcNAc...) asparagine glycan. Zn(2+)-binding residues include histidine 161, aspartate 181, and glutamate 226. A glycan (N-linked (GlcNAc...) asparagine) is linked at asparagine 241. Position 253 (aspartate 253) interacts with Zn(2+). N-linked (GlcNAc...) asparagine glycans are attached at residues asparagine 282, asparagine 361, asparagine 409, asparagine 415, and asparagine 457. Residues 402 to 496 (EPMNVGINTT…PFPFGCTRNC (95 aa)) form the Fibronectin type-III domain.

It belongs to the peptidase M28 family. M28B subfamily. Zn(2+) serves as cofactor.

It localises to the secreted. The sequence is that of Probable zinc metalloprotease SNOG_06590 from Phaeosphaeria nodorum (strain SN15 / ATCC MYA-4574 / FGSC 10173) (Glume blotch fungus).